Here is a 482-residue protein sequence, read N- to C-terminus: 2-succinylbenzoate--CoA ligase (482 aa).

The protein belongs to the ATP-dependent AMP-binding enzyme family. MenE subfamily.

It carries out the reaction 2-succinylbenzoate + ATP + CoA = 2-succinylbenzoyl-CoA + AMP + diphosphate. It functions in the pathway quinol/quinone metabolism; 1,4-dihydroxy-2-naphthoate biosynthesis; 1,4-dihydroxy-2-naphthoate from chorismate: step 5/7. It participates in quinol/quinone metabolism; menaquinone biosynthesis. Functionally, converts 2-succinylbenzoate (OSB) to 2-succinylbenzoyl-CoA (OSB-CoA). This chain is 2-succinylbenzoate--CoA ligase, found in Bacillus thuringiensis subsp. konkukian (strain 97-27).